Consider the following 142-residue polypeptide: uncharacterized protein (142 aa).

Positions 1–138 (MLEKLAEAHP…SFMILVKPLA (138 aa)) constitute an N-acetyltransferase domain.

This is an uncharacterized protein from Bacillus subtilis (strain 168).